The chain runs to 150 residues: Retinal rod rhodopsin-sensitive cGMP 3',5'-cyclic phosphodiesterase subunit delta (150 aa).

The required for association with membranes stretch occupies residues 144–150; it reads RVRLFYV.

This sequence belongs to the PDE6D/unc-119 family. In terms of assembly, interacts with the prenylated catalytic subunits of PDE6, an oligomer composed of two catalytic chains (PDE6A and PDE6B) and two inhibitory chains (gamma); has no effect on enzyme activity but promotes the release of the prenylated enzyme from cell membrane. Interacts with prenylated GRK1 and GRK7. Interacts with prenylated INPP5E. Interacts with prenylated Ras family members, including HRAS, KRAS, NRAS, RAP2A, RAP2C and RHEB. Interacts with RAB13 (prenylated form); dissociates RAB13 from membranes. Interacts with RAB28 (prenylated form); the interaction promotes RAB28 delivery to the photoreceptor outer segments. Interacts with RPGR. Interacts with ARL2. Interacts with ARL3; the interaction occurs specifically with the GTP-bound form of ARL3. Interaction with ARL2 and ARL3 promotes release of farnesylated cargo proteins. As to expression, detected in retina photoreceptor cells, especially in rods (at protein level). Detected in retina, brain and adrenal gland.

Its subcellular location is the cytoplasm. The protein localises to the cytosol. It is found in the cytoplasmic vesicle membrane. The protein resides in the cytoskeleton. It localises to the cilium basal body. Functionally, promotes the release of prenylated target proteins from cellular membranes. Modulates the activity of prenylated or palmitoylated Ras family members by regulating their subcellular location. Required for normal ciliary targeting of farnesylated target proteins, such as INPP5E. Modulates the subcellular location of target proteins by acting as a GTP specific dissociation inhibitor (GDI). Required for RAB28 localization to the cone cell outer segments in the retina. Increases the affinity of ARL3 for GTP by several orders of magnitude. Stabilizes ARL3-GTP by decreasing the nucleotide dissociation rate. The protein is Retinal rod rhodopsin-sensitive cGMP 3',5'-cyclic phosphodiesterase subunit delta (PDE6D) of Bos taurus (Bovine).